The chain runs to 834 residues: Leucine--tRNA ligase (834 aa).

The short motif at 40–50 (PYPSGNIHMGH) is the 'HIGH' region element. The 'KMSKS' region signature appears at 586 to 590 (KMSKS). K589 is a binding site for ATP.

This sequence belongs to the class-I aminoacyl-tRNA synthetase family.

It is found in the cytoplasm. It catalyses the reaction tRNA(Leu) + L-leucine + ATP = L-leucyl-tRNA(Leu) + AMP + diphosphate. The chain is Leucine--tRNA ligase from Nitratidesulfovibrio vulgaris (strain DSM 19637 / Miyazaki F) (Desulfovibrio vulgaris).